The primary structure comprises 325 residues: Tagatose 1,6-diphosphate aldolase (325 aa).

The protein belongs to the aldolase LacD family.

The enzyme catalyses D-tagatofuranose 1,6-bisphosphate = D-glyceraldehyde 3-phosphate + dihydroxyacetone phosphate. Its pathway is carbohydrate metabolism; D-tagatose 6-phosphate degradation; D-glyceraldehyde 3-phosphate and glycerone phosphate from D-tagatose 6-phosphate: step 2/2. This is Tagatose 1,6-diphosphate aldolase from Staphylococcus epidermidis (strain ATCC 35984 / DSM 28319 / BCRC 17069 / CCUG 31568 / BM 3577 / RP62A).